A 360-amino-acid polypeptide reads, in one-letter code: Chorismate synthase (360 aa).

Residues R48 and R54 each coordinate NADP(+). FMN-binding positions include R125–S127, N246–A247, G286, K301–S305, and R327.

Belongs to the chorismate synthase family. Homotetramer. Requires FMNH2 as cofactor.

It catalyses the reaction 5-O-(1-carboxyvinyl)-3-phosphoshikimate = chorismate + phosphate. It participates in metabolic intermediate biosynthesis; chorismate biosynthesis; chorismate from D-erythrose 4-phosphate and phosphoenolpyruvate: step 7/7. Its function is as follows. Catalyzes the anti-1,4-elimination of the C-3 phosphate and the C-6 proR hydrogen from 5-enolpyruvylshikimate-3-phosphate (EPSP) to yield chorismate, which is the branch point compound that serves as the starting substrate for the three terminal pathways of aromatic amino acid biosynthesis. This reaction introduces a second double bond into the aromatic ring system. The chain is Chorismate synthase from Glaesserella parasuis serovar 5 (strain SH0165) (Haemophilus parasuis).